The chain runs to 77 residues: MAFLKKSLFLVLFLGLVPLFLCENEKREGENEKEENDDQSEEKRSLGSFMKGVGKGLATVGKIVADQFGKLLEAGKG.

The first 22 residues, Met1 to Cys22, serve as a signal peptide directing secretion. The propeptide occupies Glu23–Glu42. At Lys76 the chain carries Lysine amide.

Belongs to the frog skin active peptide (FSAP) family. Dermatoxin subfamily. Expressed by the skin glands.

Its subcellular location is the secreted. Its function is as follows. Possesses a potent antimicrobial activity against Gram-positive and Gram-negative bacteria. Probably acts by disturbing membrane functions with its amphipathic structure. In Agalychnis dacnicolor (Giant Mexican leaf frog), this protein is Dermatoxin-DA1.